A 354-amino-acid chain; its full sequence is Holliday junction branch migration complex subunit RuvB (354 aa).

Residues 1–22 (MTLQTDDFAPAPARRVVSAAPA) are disordered. A large ATPase domain (RuvB-L) region spans residues 5 to 194 (TDDFAPAPAR…FGIVARLEFY (190 aa)). The segment covering 9-22 (APAPARRVVSAAPA) has biased composition (low complexity). ATP-binding positions include leucine 33, arginine 34, glycine 75, lysine 78, threonine 79, threonine 80, 141-143 (EDY), arginine 184, tyrosine 194, and arginine 231. Threonine 79 lines the Mg(2+) pocket. Residues 195 to 265 (SAQELARIVK…IAERALAMLD (71 aa)) are small ATPAse domain (RuvB-S). The tract at residues 268-354 (PEGLDVMDRK…GAQAPGLFAV (87 aa)) is head domain (RuvB-H). DNA-binding residues include arginine 323 and arginine 328.

It belongs to the RuvB family. As to quaternary structure, homohexamer. Forms an RuvA(8)-RuvB(12)-Holliday junction (HJ) complex. HJ DNA is sandwiched between 2 RuvA tetramers; dsDNA enters through RuvA and exits via RuvB. An RuvB hexamer assembles on each DNA strand where it exits the tetramer. Each RuvB hexamer is contacted by two RuvA subunits (via domain III) on 2 adjacent RuvB subunits; this complex drives branch migration. In the full resolvosome a probable DNA-RuvA(4)-RuvB(12)-RuvC(2) complex forms which resolves the HJ.

The protein localises to the cytoplasm. The catalysed reaction is ATP + H2O = ADP + phosphate + H(+). In terms of biological role, the RuvA-RuvB-RuvC complex processes Holliday junction (HJ) DNA during genetic recombination and DNA repair, while the RuvA-RuvB complex plays an important role in the rescue of blocked DNA replication forks via replication fork reversal (RFR). RuvA specifically binds to HJ cruciform DNA, conferring on it an open structure. The RuvB hexamer acts as an ATP-dependent pump, pulling dsDNA into and through the RuvAB complex. RuvB forms 2 homohexamers on either side of HJ DNA bound by 1 or 2 RuvA tetramers; 4 subunits per hexamer contact DNA at a time. Coordinated motions by a converter formed by DNA-disengaged RuvB subunits stimulates ATP hydrolysis and nucleotide exchange. Immobilization of the converter enables RuvB to convert the ATP-contained energy into a lever motion, pulling 2 nucleotides of DNA out of the RuvA tetramer per ATP hydrolyzed, thus driving DNA branch migration. The RuvB motors rotate together with the DNA substrate, which together with the progressing nucleotide cycle form the mechanistic basis for DNA recombination by continuous HJ branch migration. Branch migration allows RuvC to scan DNA until it finds its consensus sequence, where it cleaves and resolves cruciform DNA. The chain is Holliday junction branch migration complex subunit RuvB from Verminephrobacter eiseniae (strain EF01-2).